Reading from the N-terminus, the 138-residue chain is Large ribosomal subunit protein uL16 (138 aa).

This sequence belongs to the universal ribosomal protein uL16 family. As to quaternary structure, part of the 50S ribosomal subunit.

Binds 23S rRNA and is also seen to make contacts with the A and possibly P site tRNAs. The protein is Large ribosomal subunit protein uL16 of Corynebacterium kroppenstedtii (strain DSM 44385 / JCM 11950 / CIP 105744 / CCUG 35717).